We begin with the raw amino-acid sequence, 636 residues long: TNFAIP3-interacting protein 1 (636 aa).

Residues 20–73 (EASAAFERLVKENSRLKEKMQGIKMLGELLEESQMEATRLRQKAEELVKDNELL) are a coiled coil. Positions 61 to 71 (QKAEELVKDNE) are enriched in basic and acidic residues. 2 disordered regions span residues 61 to 151 (QKAE…GPLP) and 252 to 283 (MSNG…QQQA). Ser77 is subject to Phosphoserine. Residues 94–412 (SNVTASPTAP…SPLTRQREYQ (319 aa)) form an interaction with Nef region. A compositionally biased stretch (polar residues) spans 131 to 142 (EEQNSPESSSHA). Residues 196–258 (SKVHKNEQRT…KLLMSNGNKE (63 aa)) adopt a coiled-coil conformation. A Phosphoserine modification is found at Ser284. Residues 294-535 (VALGAAEKKV…RKAKASGERY (242 aa)) adopt a coiled-coil conformation. The segment at 351 to 367 (DLEAEREQKQRDFDRKL) is interaction with Shigella flexneri ipah9.8. The residue at position 403 (Ser403) is a Phosphoserine. Residues 431–588 (TPPSSPPTAF…MEHPPPLPNS (158 aa)) form a required for inhibitory activity of TNF-induced NF-kappa-B activation region. At Thr438 the chain carries Phosphothreonine. Ser442 is modified (phosphoserine). The segment at 452–510 (KQELVTQNELLKQQVKIFEEDFQRERSDRERMNEEKEELKKQVEKLQAQVTLSNAQLKA) is ubiquitin-binding domain (UBD). Positions 524-530 (QKRKAKA) match the Nuclear localization signal motif. The residue at position 552 (Tyr552) is a Phosphotyrosine. At Arg571 the chain carries Asymmetric dimethylarginine. The residue at position 599 (Arg599) is an Asymmetric dimethylarginine; alternate. Arg599 carries the omega-N-methylarginine; alternate modification. The segment at 603-636 (GGVRNPNQSSQVMDPPTARPTEPESPKNDREGPQ) is disordered. Residues 623–636 (TEPESPKNDREGPQ) show a composition bias toward basic and acidic residues. Position 627 is a phosphoserine (Ser627).

Interacts with TNFAIP3 and IKBKG (polyubiquitinated); facilitates TNFAIP3-mediated de-ubiquitination of NEMO/IKBKG. Interacts with polyubiquitin. Interacts with MAPK1, SELPLG and PIK3CD. Interacts with IRAK1 (polyubiquitinated). Interacts with MYD88; the interaction is indicative for participation in an activated TLR-signaling complex. Interacts with HIV-1 matrix protein. Interacts with TAX1BP1. In terms of assembly, (Microbial infection) Interacts with Shigella flexneri ipah9.8; the interaction promotes polyubiquitination of IKBKG. In terms of processing, phosphorylation at Tyr-552 by SRC-family kinases recruits phosphoinositide-3-kinase (PI3K) PIK3CD:p85 heterodimer which results in integrin activation and leukocyte adhesion to activated endothelium during inflammation. Ubiquitous. Strongly expressed in peripheral blood lymphocytes, spleen and skeletal muscle, and is weakly expressed in the brain. In peripheral blood mononucleocytes, isoform 4 is mainly expressed and isoform 1 and isoform 7 are almost not expressed. Expression of isoform 1 and isoform 7 increases in leukemic cells.

The protein localises to the cytoplasm. The protein resides in the nucleus. Its function is as follows. Inhibits NF-kappa-B activation and TNF-induced NF-kappa-B-dependent gene expression by regulating TAX1BP1 and A20/TNFAIP3-mediated deubiquitination of IKBKG; proposed to link A20/TNFAIP3 to ubiquitinated IKBKG. Involved in regulation of EGF-induced ERK1/ERK2 signaling pathway; blocks MAPK3/MAPK1 nuclear translocation and MAPK1-dependent transcription. Increases cell surface CD4(T4) antigen expression. Involved in the anti-inflammatory response of macrophages and positively regulates TLR-induced activation of CEBPB. Involved in the prevention of autoimmunity; this function implicates binding to polyubiquitin. Involved in leukocyte integrin activation during inflammation; this function is mediated by association with SELPLG and dependent on phosphorylation by SRC-family kinases. Interacts with HIV-1 matrix protein and is packaged into virions and overexpression can inhibit viral replication. May regulate matrix nuclear localization, both nuclear import of PIC (Preintegration complex) and export of GAG polyprotein and viral genomic RNA during virion production. In case of infection, promotes association of IKBKG with Shigella flexneri E3 ubiquitin-protein ligase ipah9.8 p which in turn promotes polyubiquitination of IKBKG leading to its proteasome-dependent degradation and thus is perturbing NF-kappa-B activation during bacterial infection. This Homo sapiens (Human) protein is TNFAIP3-interacting protein 1 (TNIP1).